A 575-amino-acid polypeptide reads, in one-letter code: Glycosyltransferase family 92 protein At1g27200 (575 aa).

A helical membrane pass occupies residues phenylalanine 22 to serine 44. One can recognise a GT92 domain in the interval leucine 293–lysine 540.

Belongs to the glycosyltransferase 92 family.

The protein localises to the membrane. The polypeptide is Glycosyltransferase family 92 protein At1g27200 (Arabidopsis thaliana (Mouse-ear cress)).